We begin with the raw amino-acid sequence, 155 residues long: SsrA-binding protein (155 aa).

It belongs to the SmpB family.

It is found in the cytoplasm. Required for rescue of stalled ribosomes mediated by trans-translation. Binds to transfer-messenger RNA (tmRNA), required for stable association of tmRNA with ribosomes. tmRNA and SmpB together mimic tRNA shape, replacing the anticodon stem-loop with SmpB. tmRNA is encoded by the ssrA gene; the 2 termini fold to resemble tRNA(Ala) and it encodes a 'tag peptide', a short internal open reading frame. During trans-translation Ala-aminoacylated tmRNA acts like a tRNA, entering the A-site of stalled ribosomes, displacing the stalled mRNA. The ribosome then switches to translate the ORF on the tmRNA; the nascent peptide is terminated with the 'tag peptide' encoded by the tmRNA and targeted for degradation. The ribosome is freed to recommence translation, which seems to be the essential function of trans-translation. The chain is SsrA-binding protein from Lactococcus lactis subsp. cremoris (strain MG1363).